Reading from the N-terminus, the 153-residue chain is SsrA-binding protein (153 aa).

Belongs to the SmpB family.

The protein localises to the cytoplasm. Functionally, required for rescue of stalled ribosomes mediated by trans-translation. Binds to transfer-messenger RNA (tmRNA), required for stable association of tmRNA with ribosomes. tmRNA and SmpB together mimic tRNA shape, replacing the anticodon stem-loop with SmpB. tmRNA is encoded by the ssrA gene; the 2 termini fold to resemble tRNA(Ala) and it encodes a 'tag peptide', a short internal open reading frame. During trans-translation Ala-aminoacylated tmRNA acts like a tRNA, entering the A-site of stalled ribosomes, displacing the stalled mRNA. The ribosome then switches to translate the ORF on the tmRNA; the nascent peptide is terminated with the 'tag peptide' encoded by the tmRNA and targeted for degradation. The ribosome is freed to recommence translation, which seems to be the essential function of trans-translation. The polypeptide is SsrA-binding protein (Sulfurovum sp. (strain NBC37-1)).